The following is a 1623-amino-acid chain: Histone-lysine N-methyltransferase set-9 (1623 aa).

Disordered regions lie at residues 1 to 102 (MADG…APQQ), 112 to 131 (AADA…RPTE), 198 to 227 (EDAV…SVAS), 448 to 600 (QRPG…VLRP), and 645 to 781 (TGQS…DEAA). The span at 62 to 71 (HQMENQEFYH) shows a compositional bias: basic and acidic residues. Low complexity predominate over residues 77–100 (EPQQIPQIPVFQPAAYNPPNYVAP). The segment covering 206–227 (PGTQYRRNQQAGGGLPSTSVAS) has biased composition (polar residues). A compositionally biased stretch (basic and acidic residues) spans 554-573 (MTQEEKNAHFARLTTDKEKP). The segment covering 587-597 (PHVPPPPPPLV) has biased composition (pro residues). Polar residues predominate over residues 645–669 (TGQSGSSAAARQRTVSGSAARAQTY). The span at 723 to 733 (HRPRGRPKGTR) shows a compositional bias: basic residues. The segment covering 772 to 781 (SESEGIDEAA) has biased composition (acidic residues). A PHD-type zinc finger spans residues 786–834 (TMRCHCGMDHGDGDTIECEGCKTWQHMACMGLTLKSNTSKYKCEMCLPR). The segment at 857-895 (AARKQKRKSEPVEQKQKSSQPSTSRKSAPMALQQPAEPR) is disordered. The span at 873–882 (KSSQPSTSRK) shows a compositional bias: polar residues. The region spanning 965–1056 (MSSEVKRQPG…RNTEVTLPFD (92 aa)) is the SET domain. 2 stretches are compositionally biased toward basic and acidic residues: residues 1089–1157 (AERH…KKME) and 1172–1194 (AREE…EGKR). Disordered regions lie at residues 1089 to 1318 (AERH…NVAP) and 1356 to 1623 (LLAG…TRWN). Positions 1093–1201 (RAMDHKKQEA…GKRKEARRRS (109 aa)) form a coiled coil. The segment covering 1242–1252 (TTQPSTSSFAT) has biased composition (polar residues). A compositionally biased stretch (low complexity) spans 1282-1293 (ATTVATPKATTA). The stretch at 1364 to 1401 (FSEVRAQIEEENRMKERSRKREAKKKAVEKEKKEHRKE) forms a coiled coil. Basic and acidic residues-rich tracts occupy residues 1365–1378 (SEVR…NRMK), 1388–1406 (KKAV…KKTN), 1413–1429 (KSEK…EKKP), and 1447–1464 (KKTE…ESSS). Polar residues predominate over residues 1533–1544 (SSSNTAPTTTIA).

This sequence belongs to the class V-like SAM-binding methyltransferase superfamily. Predominantly expressed in the germline (at protein level).

Its subcellular location is the nucleus. It carries out the reaction L-lysyl-[histone] + S-adenosyl-L-methionine = N(6)-methyl-L-lysyl-[histone] + S-adenosyl-L-homocysteine + H(+). In terms of biological role, histone methyltransferase. Might play a role in transcriptional regulation. Together with set-26, negatively regulates lifespan in a germline-independent, partially daf-16-dependent fashion. Together with set-26, plays a role in germline development and maintenance and might play a role in the restriction of the trimethylation mark on histone H3 'Lys-4'(H3K4me3) to target genes specifically in the germline. The polypeptide is Histone-lysine N-methyltransferase set-9 (Caenorhabditis elegans).